The following is a 294-amino-acid chain: Diaminopimelate epimerase (294 aa).

Positions 13, 46, and 69 each coordinate substrate. Cysteine 78 (proton donor) is an active-site residue. Substrate-binding positions include 79–80 (GN), asparagine 173, asparagine 206, and 224–225 (ER). Residue cysteine 233 is the Proton acceptor of the active site. 234–235 (GT) is a substrate binding site.

The protein belongs to the diaminopimelate epimerase family. Homodimer.

The protein localises to the cytoplasm. It carries out the reaction (2S,6S)-2,6-diaminopimelate = meso-2,6-diaminopimelate. It functions in the pathway amino-acid biosynthesis; L-lysine biosynthesis via DAP pathway; DL-2,6-diaminopimelate from LL-2,6-diaminopimelate: step 1/1. In terms of biological role, catalyzes the stereoinversion of LL-2,6-diaminopimelate (L,L-DAP) to meso-diaminopimelate (meso-DAP), a precursor of L-lysine and an essential component of the bacterial peptidoglycan. This Variovorax paradoxus (strain S110) protein is Diaminopimelate epimerase.